The following is a 259-amino-acid chain: MTDLKASSLRALKLMDLTTLNDDDTDEKVIALCHQTKTPVGNTAAICIYPRFIPIARKTLKEQGTPEIRIATVTNFPHGNDDIEIALAETRAAIAYGADEVDVVFPYRALMAGNEQVGFDLVKACKEACAAANVLLKVIIETGELKDEALIRKASEISIKAGADFIKTSTGKVAVNATPESARIMMEVIRDMGVEKTVGFKPAGGVRTAEDAQKYLAIADELFGADWADARHYRFGASSLLASLLKALGHGDGKSASSY.

D102 functions as the Proton donor/acceptor in the catalytic mechanism. K167 (schiff-base intermediate with acetaldehyde) is an active-site residue. K201 (proton donor/acceptor) is an active-site residue.

It belongs to the DeoC/FbaB aldolase family. DeoC type 2 subfamily.

It is found in the cytoplasm. The catalysed reaction is 2-deoxy-D-ribose 5-phosphate = D-glyceraldehyde 3-phosphate + acetaldehyde. It functions in the pathway carbohydrate degradation; 2-deoxy-D-ribose 1-phosphate degradation; D-glyceraldehyde 3-phosphate and acetaldehyde from 2-deoxy-alpha-D-ribose 1-phosphate: step 2/2. Functionally, catalyzes a reversible aldol reaction between acetaldehyde and D-glyceraldehyde 3-phosphate to generate 2-deoxy-D-ribose 5-phosphate. The chain is Deoxyribose-phosphate aldolase from Shigella boydii serotype 4 (strain Sb227).